A 149-amino-acid polypeptide reads, in one-letter code: Putative pre-16S rRNA nuclease (149 aa).

The protein belongs to the YqgF nuclease family.

The protein localises to the cytoplasm. Functionally, could be a nuclease involved in processing of the 5'-end of pre-16S rRNA. The chain is Putative pre-16S rRNA nuclease from Pseudoalteromonas translucida (strain TAC 125).